A 701-amino-acid polypeptide reads, in one-letter code: Triadin (701 aa).

Residues 1–28 (MTEITAEGNASTTTTVIDSKNGSVPKSP) are disordered. The Cytoplasmic portion of the chain corresponds to 1–47 (MTEITAEGNASTTTTVIDSKNGSVPKSPGKVLKRTVTEDIVTTFSSP). The span at 8–24 (GNASTTTTVIDSKNGSV) shows a compositional bias: polar residues. A helical transmembrane segment spans residues 48-68 (AAWLLVIALIITWSAVAVVMF). The Lumenal segment spans residues 69–701 (DLVDYKNFSA…SSPGQKQQGQ (633 aa)). A glycan (N-linked (GlcNAc...) asparagine) is linked at Asn-75. Residues 117–130 (DGDEDDDDGDEDTD) are compositionally biased toward acidic residues. Disordered regions lie at residues 117 to 256 (DGDE…KHEQ), 273 to 654 (GDLR…TKRQ), and 676 to 701 (FPVT…QQGQ). Composition is skewed to basic and acidic residues over residues 131-256 (KGEI…KHEQ), 303-351 (EGKE…KAPE), 365-385 (AKKD…EEHP), 391-426 (EKKE…KEET), 437-485 (GKKE…EVKP), and 492-643 (VKKE…KAKE). Asn-617 carries an N-linked (GlcNAc...) asparagine glycan. Residues 684-701 (PGESSGQPSSPGQKQQGQ) are compositionally biased toward low complexity.

As to quaternary structure, homooligomer of variable subunit number; disulfide-linked. Interacts with CASQ1 and RYR1 in skeletal muscle. Interacts with CASQ2. Post-translationally, phosphorylated by CaMK2. N-glycosylated. In terms of tissue distribution, detected in heart (at protein level). Skeletal and cardiac muscle.

Its subcellular location is the sarcoplasmic reticulum membrane. Functionally, contributes to the regulation of lumenal Ca2+ release via the sarcoplasmic reticulum calcium release channels RYR1 and RYR2, a key step in triggering skeletal and heart muscle contraction. Required for normal organization of the triad junction, where T-tubules and the sarcoplasmic reticulum terminal cisternae are in close contact. Required for normal skeletal muscle strength. Plays a role in excitation-contraction coupling in the heart and in regulating the rate of heart beats. The chain is Triadin (TRDN) from Canis lupus familiaris (Dog).